Consider the following 248-residue polypeptide: Mannose-binding protein C (248 aa).

Positions 1–20 (MSLIPSLSLLLMSMVAASYS) are cleaved as a signal peptide. One can recognise a Collagen-like domain in the interval 42–99 (GINGFPGKDGRDGTKGEKGEPGQGLRGLQGPPGKLGPPGNPGPSGSPGPKGQKGDPGN). A disordered region spans residues 43–110 (INGFPGKDGR…PDCDSSLAVS (68 aa)). Position 47 is a 4-hydroxyproline (Pro47). A compositionally biased stretch (basic and acidic residues) spans 49–61 (KDGRDGTKGEKGE). 4-hydroxyproline is present on residues Pro73, Pro79, Pro82, and Pro88. Pro residues predominate over residues 75 to 87 (KLGPPGNPGPSGS). The stretch at 112–130 (RKALQTEMARIKKWLTFSL) forms a coiled coil. One can recognise a C-type lectin domain in the interval 134 to 245 (VGNKFFLTNG…CSSSHLAVCE (112 aa)). Intrachain disulfides connect Cys155/Cys244 and Cys222/Cys236.

Oligomeric complex of 3 or more homotrimers. Interacts with MASP1 and MASP2. Interacts with MEP1A and MEP1B and may inhibit their catalytic activity. In terms of processing, hydroxylation on proline residues within the sequence motif, GXPG, is most likely to be 4-hydroxy as this fits the requirement for 4-hydroxylation in vertebrates.

The protein resides in the secreted. Its function is as follows. Calcium-dependent lectin involved in innate immune defense. Binds mannose, fucose and N-acetylglucosamine on different microorganisms and activates the lectin complement pathway. Binds to late apoptotic cells, as well as to apoptotic blebs and to necrotic cells, but not to early apoptotic cells, facilitating their uptake by macrophages. This chain is Mannose-binding protein C (MBL2), found in Nomascus concolor (Black crested gibbon).